The sequence spans 286 residues: 4-diphosphocytidyl-2-C-methyl-D-erythritol kinase (286 aa).

Lysine 11 is an active-site residue. 94–104 (PMGGGIGGGSS) provides a ligand contact to ATP. The active site involves aspartate 136.

The protein belongs to the GHMP kinase family. IspE subfamily.

It catalyses the reaction 4-CDP-2-C-methyl-D-erythritol + ATP = 4-CDP-2-C-methyl-D-erythritol 2-phosphate + ADP + H(+). It participates in isoprenoid biosynthesis; isopentenyl diphosphate biosynthesis via DXP pathway; isopentenyl diphosphate from 1-deoxy-D-xylulose 5-phosphate: step 3/6. Its function is as follows. Catalyzes the phosphorylation of the position 2 hydroxy group of 4-diphosphocytidyl-2C-methyl-D-erythritol. This is 4-diphosphocytidyl-2-C-methyl-D-erythritol kinase from Pseudomonas putida (strain ATCC 47054 / DSM 6125 / CFBP 8728 / NCIMB 11950 / KT2440).